The chain runs to 248 residues: Phosphoadenosine 5'-phosphosulfate reductase (248 aa).

The active-site Nucleophile; cysteine thiosulfonate intermediate is the C239.

The protein belongs to the PAPS reductase family. CysH subfamily.

Its subcellular location is the cytoplasm. The catalysed reaction is [thioredoxin]-disulfide + sulfite + adenosine 3',5'-bisphosphate + 2 H(+) = [thioredoxin]-dithiol + 3'-phosphoadenylyl sulfate. Its pathway is sulfur metabolism; hydrogen sulfide biosynthesis; sulfite from sulfate: step 3/3. In terms of biological role, catalyzes the formation of sulfite from phosphoadenosine 5'-phosphosulfate (PAPS) using thioredoxin as an electron donor. This chain is Phosphoadenosine 5'-phosphosulfate reductase, found in Alteromonas mediterranea (strain DSM 17117 / CIP 110805 / LMG 28347 / Deep ecotype).